We begin with the raw amino-acid sequence, 126 residues long: MADEIAKAQVARPGGDTIFGKIIRKEIPAKIIFEDDRCLAFHDISPQAPTHFLVIPKKHISQISVAEDDNESLLGHLMIVGKKCAADLGLNKGYRMVVNEGSDGGQSVYHVHLHVLGGRQMHWPPG.

An N-acetylalanine modification is found at A2. The region spanning I18–G126 is the HIT domain. 2 positions are modified to N6-acetyllysine: K21 and K30. An AMP-binding site is contributed by D43–I44. S45 and S72 each carry phosphoserine. Residues N99, G105 to S107, and H112 to H114 each bind AMP. Positions H110–H114 match the Histidine triad motif motif. Catalysis depends on H112, which acts as the Tele-AMP-histidine intermediate.

Belongs to the HINT family. As to quaternary structure, homodimer. Interacts with CDK7. Interacts with RUVBL1 and RUVBL2 and is associated with the LEF1/TCF1-CTNNB1 complex and with a KAT5 histone acetyltransferase complex. Identified in a complex with MITF and CTNNB1. Interacts with CDC34 and RBX1, and is part of a SCF (SKP2-CUL1-F-box protein) E3 ubiquitin-protein ligase complex. Interacts with SUMO1, SUMO2 and RGS17. Interacts with the Ten-1 ICD form of TENM1. Interacts with CALM1; interaction increases in the presence of calcium ions.

It is found in the cytoplasm. It localises to the nucleus. The catalysed reaction is adenosine 5'-phosphoramidate + H2O = AMP + NH4(+). Exhibits adenosine 5'-monophosphoramidase activity, hydrolyzing purine nucleotide phosphoramidates with a single phosphate group such as adenosine 5'monophosphoramidate (AMP-NH2) to yield AMP and NH2. Hydrolyzes adenosine 5'monophosphomorpholidate (AMP-morpholidate) and guanosine 5'monophosphomorpholidate (GMP-morpholidate). Hydrolyzes lysyl-AMP (AMP-N-epsilon-(N-alpha-acetyl lysine methyl ester)) generated by lysine tRNA ligase, as well as Met-AMP, His-AMP and Asp-AMP, lysyl-GMP (GMP-N-epsilon-(N-alpha-acetyl lysine methyl ester)) and AMP-N-alanine methyl ester. Can also convert adenosine 5'-O-phosphorothioate and guanosine 5'-O-phosphorothioate to the corresponding nucleoside 5'-O-phosphates with concomitant release of hydrogen sulfide. In addition, functions as a scaffolding protein that modulates transcriptional activation by the LEF1/TCF1-CTNNB1 complex and by the complex formed with MITF and CTNNB1. Modulates p53/TP53 levels and p53/TP53-mediated apoptosis. Modulates proteasomal degradation of target proteins by the SCF (SKP2-CUL1-F-box protein) E3 ubiquitin-protein ligase complex. Also exhibits SUMO-specific isopeptidase activity, deconjugating SUMO1 from RANGAP1 and RGS17. The polypeptide is Adenosine 5'-monophosphoramidase HINT1 (HINT1) (Pongo abelii (Sumatran orangutan)).